The chain runs to 421 residues: E3 ubiquitin protein ligase DRIP1 (421 aa).

An RING-type zinc finger spans residues 16 to 57 (CSICDNILRDATTISECLHTFCRKCIYEKITEDEIETCPVCN). 2 stretches are compositionally biased toward polar residues: residues 106–121 (ISSLVVSTPMVSAQAG) and 157–172 (ESTSSPDTLNKFTQNK). Disordered regions lie at residues 106-198 (ISSL…WDSK) and 216-307 (PLKS…QERR). A compositionally biased stretch (basic and acidic residues) spans 178-198 (SCKESISNKENKDGDEPWDSK). Residues 218-227 (KSSASQGSGS) are compositionally biased toward low complexity. Over residues 244–253 (TKTKNKKRKC) the composition is skewed to basic residues. The span at 262–271 (NGDPTTSETV) shows a compositional bias: polar residues. Residues 274 to 284 (KRMRTTQRKRS) show a composition bias toward basic residues. The span at 285–294 (ATTLGDSRNL) shows a compositional bias: polar residues.

Interacts with DREB2A. Autoubiquitinated. In terms of tissue distribution, expressed in roots, leaves and flowers.

The protein resides in the nucleus. The catalysed reaction is S-ubiquitinyl-[E2 ubiquitin-conjugating enzyme]-L-cysteine + [acceptor protein]-L-lysine = [E2 ubiquitin-conjugating enzyme]-L-cysteine + N(6)-ubiquitinyl-[acceptor protein]-L-lysine.. It participates in protein modification; protein ubiquitination. Functionally, E3 ubiquitin-protein ligase that acts as a negative regulator of the response to water stress. Mediates ubiquitination and subsequent proteasomal degradation of the drought-induced transcriptional activator DREB2A. Functionally redundant with DRIP2. This is E3 ubiquitin protein ligase DRIP1 (DRIP1) from Arabidopsis thaliana (Mouse-ear cress).